Consider the following 105-residue polypeptide: Endoribonuclease MazF1 (105 aa).

The protein belongs to the PemK/MazF family. In terms of assembly, forms a complex with cognate antitoxin MazE1.

Toxic component of a type II toxin-antitoxin (TA) system. Acts as an endoribonuclease on single-strand RNA, cleaving between the first and second bases in the sequence UCGCU. Neutralized by coexpression with cognate antitoxin MazE1. The chain is Endoribonuclease MazF1 (mazF1) from Mycobacterium bovis (strain ATCC BAA-935 / AF2122/97).